The primary structure comprises 653 residues: tRNA 5-methylaminomethyl-2-thiouridine biosynthesis bifunctional protein MnmC (653 aa).

The tRNA (mnm(5)s(2)U34)-methyltransferase stretch occupies residues 1 to 236 (MPDRLVPATL…KFAMLVGEYA (236 aa)). The interval 260–653 (IGAGLAGCAL…IRALRGRKLG (394 aa)) is FAD-dependent cmnm(5)s(2)U34 oxidoreductase.

The protein in the N-terminal section; belongs to the methyltransferase superfamily. tRNA (mnm(5)s(2)U34)-methyltransferase family. This sequence in the C-terminal section; belongs to the DAO family. FAD serves as cofactor.

Its subcellular location is the cytoplasm. The enzyme catalyses 5-aminomethyl-2-thiouridine(34) in tRNA + S-adenosyl-L-methionine = 5-methylaminomethyl-2-thiouridine(34) in tRNA + S-adenosyl-L-homocysteine + H(+). In terms of biological role, catalyzes the last two steps in the biosynthesis of 5-methylaminomethyl-2-thiouridine (mnm(5)s(2)U) at the wobble position (U34) in tRNA. Catalyzes the FAD-dependent demodification of cmnm(5)s(2)U34 to nm(5)s(2)U34, followed by the transfer of a methyl group from S-adenosyl-L-methionine to nm(5)s(2)U34, to form mnm(5)s(2)U34. This chain is tRNA 5-methylaminomethyl-2-thiouridine biosynthesis bifunctional protein MnmC, found in Burkholderia vietnamiensis (strain G4 / LMG 22486) (Burkholderia cepacia (strain R1808)).